A 602-amino-acid chain; its full sequence is Pentatricopeptide repeat-containing protein At5g11310, mitochondrial (602 aa).

The N-terminal 35 residues, 1–35, are a transit peptide targeting the mitochondrion; that stretch reads MNSLFTAFRRNLLLNPNPHRNFFLHRLLSSSRRSS. PPR repeat units follow at residues 134-165, 172-202, 211-241, 249-283, 284-318, 319-353, 354-388, 389-423, 424-458, 459-493, and 494-528; these read SPSL…VRSD, SADT…ARSY, ELRL…IGGT, SVRI…NVKP, TVVT…EMEI, NFMV…ESGP, TIVT…GVDP, TTTT…GHSP, DRLT…GIDP, DLLT…GIIP, and QYIT…PHSK.

The protein belongs to the PPR family. P subfamily.

It is found in the mitochondrion. The protein is Pentatricopeptide repeat-containing protein At5g11310, mitochondrial of Arabidopsis thaliana (Mouse-ear cress).